A 149-amino-acid chain; its full sequence is Putative pre-16S rRNA nuclease (149 aa).

The protein belongs to the YqgF nuclease family.

Its subcellular location is the cytoplasm. In terms of biological role, could be a nuclease involved in processing of the 5'-end of pre-16S rRNA. The polypeptide is Putative pre-16S rRNA nuclease (Burkholderia ambifaria (strain MC40-6)).